The chain runs to 460 residues: UDP-N-acetylmuramoylalanine--D-glutamate ligase (460 aa).

120–126 (GSNGKTT) is an ATP binding site.

Belongs to the MurCDEF family.

The protein localises to the cytoplasm. It catalyses the reaction UDP-N-acetyl-alpha-D-muramoyl-L-alanine + D-glutamate + ATP = UDP-N-acetyl-alpha-D-muramoyl-L-alanyl-D-glutamate + ADP + phosphate + H(+). Its pathway is cell wall biogenesis; peptidoglycan biosynthesis. Functionally, cell wall formation. Catalyzes the addition of glutamate to the nucleotide precursor UDP-N-acetylmuramoyl-L-alanine (UMA). The protein is UDP-N-acetylmuramoylalanine--D-glutamate ligase of Lactobacillus delbrueckii subsp. bulgaricus (strain ATCC 11842 / DSM 20081 / BCRC 10696 / JCM 1002 / NBRC 13953 / NCIMB 11778 / NCTC 12712 / WDCM 00102 / Lb 14).